The chain runs to 365 residues: DNA replication and repair protein RecF (365 aa).

30 to 37 contributes to the ATP binding site; sequence GQNGSGKT.

The protein belongs to the RecF family.

It localises to the cytoplasm. In terms of biological role, the RecF protein is involved in DNA metabolism; it is required for DNA replication and normal SOS inducibility. RecF binds preferentially to single-stranded, linear DNA. It also seems to bind ATP. The chain is DNA replication and repair protein RecF from Shewanella woodyi (strain ATCC 51908 / MS32).